The primary structure comprises 81 residues: Acyl carrier protein (81 aa).

The Carrier domain occupies 3–78; that stretch reads QEIFDKIKNI…EAVNIIAEKT (76 aa). Ser38 bears the O-(pantetheine 4'-phosphoryl)serine mark.

It belongs to the acyl carrier protein (ACP) family. 4'-phosphopantetheine is transferred from CoA to a specific serine of apo-ACP by AcpS. This modification is essential for activity because fatty acids are bound in thioester linkage to the sulfhydryl of the prosthetic group.

It localises to the cytoplasm. The protein operates within lipid metabolism; fatty acid biosynthesis. In terms of biological role, carrier of the growing fatty acid chain in fatty acid biosynthesis. This chain is Acyl carrier protein, found in Picosynechococcus sp. (strain ATCC 27264 / PCC 7002 / PR-6) (Agmenellum quadruplicatum).